We begin with the raw amino-acid sequence, 101 residues long: Small ribosomal subunit protein uS14 (101 aa).

Belongs to the universal ribosomal protein uS14 family. As to quaternary structure, part of the 30S ribosomal subunit. Contacts proteins S3 and S10.

Functionally, binds 16S rRNA, required for the assembly of 30S particles and may also be responsible for determining the conformation of the 16S rRNA at the A site. The chain is Small ribosomal subunit protein uS14 from Bartonella quintana (strain Toulouse) (Rochalimaea quintana).